A 200-amino-acid polypeptide reads, in one-letter code: DNA-directed RNA polymerase subunit 7-like protein (200 aa).

This sequence belongs to the eukaryotic RPB7/RPC8 RNA polymerase subunit family.

Its subcellular location is the nucleus. The chain is DNA-directed RNA polymerase subunit 7-like protein (NRPB7L) from Arabidopsis thaliana (Mouse-ear cress).